A 248-amino-acid polypeptide reads, in one-letter code: Ubiquinone/menaquinone biosynthesis C-methyltransferase UbiE (248 aa).

Positions 68 and 92 each coordinate S-adenosyl-L-methionine.

Belongs to the class I-like SAM-binding methyltransferase superfamily. MenG/UbiE family.

It carries out the reaction a 2-demethylmenaquinol + S-adenosyl-L-methionine = a menaquinol + S-adenosyl-L-homocysteine + H(+). The catalysed reaction is a 2-methoxy-6-(all-trans-polyprenyl)benzene-1,4-diol + S-adenosyl-L-methionine = a 5-methoxy-2-methyl-3-(all-trans-polyprenyl)benzene-1,4-diol + S-adenosyl-L-homocysteine + H(+). It functions in the pathway quinol/quinone metabolism; menaquinone biosynthesis; menaquinol from 1,4-dihydroxy-2-naphthoate: step 2/2. It participates in cofactor biosynthesis; ubiquinone biosynthesis. Its function is as follows. Methyltransferase required for the conversion of demethylmenaquinol (DMKH2) to menaquinol (MKH2) and the conversion of 2-polyprenyl-6-methoxy-1,4-benzoquinol (DDMQH2) to 2-polyprenyl-3-methyl-6-methoxy-1,4-benzoquinol (DMQH2). This chain is Ubiquinone/menaquinone biosynthesis C-methyltransferase UbiE, found in Rickettsia bellii (strain OSU 85-389).